Reading from the N-terminus, the 539-residue chain is Chaperonin GroEL (539 aa).

ATP is bound by residues 30-33 (TLGP), 87-91 (DGTTT), glycine 414, 479-481 (DAL), and aspartate 495.

It belongs to the chaperonin (HSP60) family. As to quaternary structure, forms a cylinder of 14 subunits composed of two heptameric rings stacked back-to-back. Interacts with the co-chaperonin GroES.

The protein localises to the cytoplasm. It catalyses the reaction ATP + H2O + a folded polypeptide = ADP + phosphate + an unfolded polypeptide.. Its function is as follows. Together with its co-chaperonin GroES, plays an essential role in assisting protein folding. The GroEL-GroES system forms a nano-cage that allows encapsulation of the non-native substrate proteins and provides a physical environment optimized to promote and accelerate protein folding. In Caldicellulosiruptor bescii (strain ATCC BAA-1888 / DSM 6725 / KCTC 15123 / Z-1320) (Anaerocellum thermophilum), this protein is Chaperonin GroEL.